The primary structure comprises 502 residues: Glycerol kinase (502 aa).

An ADP-binding site is contributed by Thr14. Thr14, Thr15, and Ser16 together coordinate ATP. Sn-glycerol 3-phosphate is bound at residue Thr14. ADP is bound at residue Arg18. 3 residues coordinate sn-glycerol 3-phosphate: Arg84, Glu85, and Tyr136. Glycerol-binding residues include Arg84, Glu85, and Tyr136. His232 carries the post-translational modification Phosphohistidine; by HPr. Asp246 provides a ligand contact to sn-glycerol 3-phosphate. 2 residues coordinate glycerol: Asp246 and Gln247. ADP is bound by residues Thr268 and Gly311. The ATP site is built by Thr268, Gly311, Gln315, and Gly412. Residues Gly412 and Asn416 each contribute to the ADP site.

This sequence belongs to the FGGY kinase family. As to quaternary structure, homotetramer and homodimer (in equilibrium). Post-translationally, the phosphoenolpyruvate-dependent sugar phosphotransferase system (PTS), including enzyme I, and histidine-containing protein (HPr) are required for the phosphorylation, which leads to the activation of the enzyme.

The catalysed reaction is glycerol + ATP = sn-glycerol 3-phosphate + ADP + H(+). It functions in the pathway polyol metabolism; glycerol degradation via glycerol kinase pathway; sn-glycerol 3-phosphate from glycerol: step 1/1. With respect to regulation, activated by phosphorylation and inhibited by fructose 1,6-bisphosphate (FBP). In terms of biological role, key enzyme in the regulation of glycerol uptake and metabolism. Catalyzes the phosphorylation of glycerol to yield sn-glycerol 3-phosphate. The polypeptide is Glycerol kinase (Streptococcus pneumoniae serotype 2 (strain D39 / NCTC 7466)).